We begin with the raw amino-acid sequence, 373 residues long: MIKDIRTYKLCYEGINDERDALAIKGLAEHPMEIVATEIETSDGYVGYGESLAYGCSDAVQVTIEKILKPLLLKEDEELIEYLWDKMYKATLRFGRRGIAIAGISGVDTALWDIMGKKAKKPIYKLLGGSKRKVRAYITGGYYSEKKDLEKLRDEEAYYVKMGFKGIKVKIGAKSMEEDIERLKAIREVVGEDVKIAVDANNVYTFEEALEMGRRLEKLGIWFFEEPIQTDYLDLSARLAEELEVPIAGYETAYTRWEFYEIMRKRAVDIVQTDVMWTGGISEMMKIGNMAKVMGYPLIPHYSAGGISLIGNLHVAAALNSPWIEMHLRKNDLRDKIFKESIEIDNGHLVVPDRPGLGYTIRDGVFEEYKCKS.

Mg(2+)-binding residues include Asp-199, Glu-225, and Glu-251.

The protein belongs to the mandelate racemase/muconate lactonizing enzyme family. As to quaternary structure, homooctamer. It depends on Mg(2+) as a cofactor.

The enzyme catalyses D-arabinonate = 2-dehydro-3-deoxy-D-arabinonate + H2O. Inhibited by substrate levels above 8 mM. Its function is as follows. Catalyzes the dehydration of D-arabinonate to 2-keto-3-deoxy-D-arabinonate. Participates in a pentose oxidation pathway that converts D-arabinonate to 2-oxoglutarate. This chain is Arabinonate dehydratase, found in Saccharolobus solfataricus (strain ATCC 35092 / DSM 1617 / JCM 11322 / P2) (Sulfolobus solfataricus).